We begin with the raw amino-acid sequence, 104 residues long: uncharacterized protein (104 aa).

An HIT domain is found at 3 to 104; it reads VFEKIIQGEI…HFHILSGDKH (102 aa). Residues 93-97 carry the Histidine triad motif motif; that stretch reads HLHFH.

This is an uncharacterized protein from Helicobacter pylori (strain J99 / ATCC 700824) (Campylobacter pylori J99).